The sequence spans 49 residues: Defensin Tm-AMP-D1.2 (49 aa).

Disulfide bonds link Cys3-Cys49, Cys14-Cys34, Cys20-Cys43, and Cys24-Cys45.

Functionally, plant defense peptide. In Triticum monococcum (Einkorn wheat), this protein is Defensin Tm-AMP-D1.2.